A 492-amino-acid chain; its full sequence is N-succinylglutamate 5-semialdehyde dehydrogenase (492 aa).

An NAD(+)-binding site is contributed by 220 to 225 (GSANTG). Residues glutamate 243 and cysteine 277 contribute to the active site.

It belongs to the aldehyde dehydrogenase family. AstD subfamily.

The enzyme catalyses N-succinyl-L-glutamate 5-semialdehyde + NAD(+) + H2O = N-succinyl-L-glutamate + NADH + 2 H(+). Its pathway is amino-acid degradation; L-arginine degradation via AST pathway; L-glutamate and succinate from L-arginine: step 4/5. Catalyzes the NAD-dependent reduction of succinylglutamate semialdehyde into succinylglutamate. This is N-succinylglutamate 5-semialdehyde dehydrogenase from Escherichia coli (strain K12 / MC4100 / BW2952).